Reading from the N-terminus, the 228-residue chain is NAD(P)H-hydrate epimerase (228 aa).

One can recognise a YjeF N-terminal domain in the interval 9–214 (AQNIDQELFN…DLLLKKYELE (206 aa)). A (6S)-NADPHX-binding site is contributed by 60 to 64 (NNGGD). The K(+) site is built by Asn61 and Asp125. (6S)-NADPHX is bound by residues 129–135 (GFSFKGE) and Asp158. Position 161 (Ser161) interacts with K(+).

The protein belongs to the NnrE/AIBP family. It depends on K(+) as a cofactor.

It carries out the reaction (6R)-NADHX = (6S)-NADHX. The enzyme catalyses (6R)-NADPHX = (6S)-NADPHX. Functionally, catalyzes the epimerization of the S- and R-forms of NAD(P)HX, a damaged form of NAD(P)H that is a result of enzymatic or heat-dependent hydration. This is a prerequisite for the S-specific NAD(P)H-hydrate dehydratase to allow the repair of both epimers of NAD(P)HX. This is NAD(P)H-hydrate epimerase from Nematostella vectensis (Starlet sea anemone).